The chain runs to 347 residues: NADH-ubiquinone oxidoreductase chain 2 (347 aa).

A run of 11 helical transmembrane segments spans residues 3–23 (PPILIIIMATIMTGTMIVMLS), 25–45 (HWLLIWIGFEMNMLAVIPVLM), 66–86 (ASMLLMMGVTINLLYSGQWVV), 96–116 (IMMTIALTMKLGLSPFHFWVP), 122–142 (ITLTSGMILLTWQKIAPMSVL), 149–169 (INTNLLMLVALVSVLVGGWGG), 178–198 (IMAYSSIAHMGWMAAIIIYNP), 201–221 (MILNLVLYILMTLSTFMLFML), 237–257 (FPLITSIILILMLSLGGLPPL), 274–294 (NMIIIPTLMAITALLNLYFYL), and 323–343 (TILLPPLIITSTMLLPLTPML).

This sequence belongs to the complex I subunit 2 family. Core subunit of respiratory chain NADH dehydrogenase (Complex I) which is composed of 45 different subunits. Interacts with TMEM242.

It localises to the mitochondrion inner membrane. The catalysed reaction is a ubiquinone + NADH + 5 H(+)(in) = a ubiquinol + NAD(+) + 4 H(+)(out). Functionally, core subunit of the mitochondrial membrane respiratory chain NADH dehydrogenase (Complex I) which catalyzes electron transfer from NADH through the respiratory chain, using ubiquinone as an electron acceptor. Essential for the catalytic activity and assembly of complex I. The chain is NADH-ubiquinone oxidoreductase chain 2 from Canis rufus (Red wolf).